The chain runs to 616 residues: Dihydroxy-acid dehydratase (616 aa).

Aspartate 81 contributes to the Mg(2+) binding site. Cysteine 122 contributes to the [2Fe-2S] cluster binding site. 2 residues coordinate Mg(2+): aspartate 123 and lysine 124. An N6-carboxylysine modification is found at lysine 124. Cysteine 195 contributes to the [2Fe-2S] cluster binding site. Residue glutamate 491 participates in Mg(2+) binding. Serine 517 serves as the catalytic Proton acceptor.

It belongs to the IlvD/Edd family. As to quaternary structure, homodimer. The cofactor is [2Fe-2S] cluster. Requires Mg(2+) as cofactor.

It catalyses the reaction (2R)-2,3-dihydroxy-3-methylbutanoate = 3-methyl-2-oxobutanoate + H2O. The catalysed reaction is (2R,3R)-2,3-dihydroxy-3-methylpentanoate = (S)-3-methyl-2-oxopentanoate + H2O. The protein operates within amino-acid biosynthesis; L-isoleucine biosynthesis; L-isoleucine from 2-oxobutanoate: step 3/4. It participates in amino-acid biosynthesis; L-valine biosynthesis; L-valine from pyruvate: step 3/4. Functions in the biosynthesis of branched-chain amino acids. Catalyzes the dehydration of (2R,3R)-2,3-dihydroxy-3-methylpentanoate (2,3-dihydroxy-3-methylvalerate) into 2-oxo-3-methylpentanoate (2-oxo-3-methylvalerate) and of (2R)-2,3-dihydroxy-3-methylbutanoate (2,3-dihydroxyisovalerate) into 2-oxo-3-methylbutanoate (2-oxoisovalerate), the penultimate precursor to L-isoleucine and L-valine, respectively. This is Dihydroxy-acid dehydratase from Methylocella silvestris (strain DSM 15510 / CIP 108128 / LMG 27833 / NCIMB 13906 / BL2).